We begin with the raw amino-acid sequence, 355 residues long: Lipoyl synthase (355 aa).

The RPE1 insert domain maps to 7–55 (HLSKFAYREEFAGNTEVLATAAYKEDCADASTGLTPKLPLEVEFGKMSK). [4Fe-4S] cluster is bound by residues C86, C91, C97, C112, C116, C119, and S325. Positions 98–314 (WSKKHATVMI…ERVARTKGFL (217 aa)) constitute a Radical SAM core domain.

Belongs to the radical SAM superfamily. Lipoyl synthase family. Requires [4Fe-4S] cluster as cofactor.

It localises to the cytoplasm. The catalysed reaction is [[Fe-S] cluster scaffold protein carrying a second [4Fe-4S](2+) cluster] + N(6)-octanoyl-L-lysyl-[protein] + 2 oxidized [2Fe-2S]-[ferredoxin] + 2 S-adenosyl-L-methionine + 4 H(+) = [[Fe-S] cluster scaffold protein] + N(6)-[(R)-dihydrolipoyl]-L-lysyl-[protein] + 4 Fe(3+) + 2 hydrogen sulfide + 2 5'-deoxyadenosine + 2 L-methionine + 2 reduced [2Fe-2S]-[ferredoxin]. It participates in protein modification; protein lipoylation via endogenous pathway; protein N(6)-(lipoyl)lysine from octanoyl-[acyl-carrier-protein]: step 2/2. In terms of biological role, catalyzes the radical-mediated insertion of two sulfur atoms into the C-6 and C-8 positions of the octanoyl moiety bound to the lipoyl domains of lipoate-dependent enzymes, thereby converting the octanoylated domains into lipoylated derivatives. This is Lipoyl synthase from Rickettsia bellii (strain RML369-C).